The primary structure comprises 413 residues: Gamma-glutamyl phosphate reductase (413 aa).

Belongs to the gamma-glutamyl phosphate reductase family.

The protein resides in the cytoplasm. It catalyses the reaction L-glutamate 5-semialdehyde + phosphate + NADP(+) = L-glutamyl 5-phosphate + NADPH + H(+). It participates in amino-acid biosynthesis; L-proline biosynthesis; L-glutamate 5-semialdehyde from L-glutamate: step 2/2. Catalyzes the NADPH-dependent reduction of L-glutamate 5-phosphate into L-glutamate 5-semialdehyde and phosphate. The product spontaneously undergoes cyclization to form 1-pyrroline-5-carboxylate. This is Gamma-glutamyl phosphate reductase from Anoxybacillus flavithermus (strain DSM 21510 / WK1).